Reading from the N-terminus, the 101-residue chain is Large ribosomal subunit protein uL24 (101 aa).

Belongs to the universal ribosomal protein uL24 family. As to quaternary structure, part of the 50S ribosomal subunit.

Functionally, one of two assembly initiator proteins, it binds directly to the 5'-end of the 23S rRNA, where it nucleates assembly of the 50S subunit. In terms of biological role, one of the proteins that surrounds the polypeptide exit tunnel on the outside of the subunit. In Streptococcus pyogenes serotype M1, this protein is Large ribosomal subunit protein uL24.